Reading from the N-terminus, the 70-residue chain is Probable protein transport protein Sec61 subunit gamma (70 aa).

Topologically, residues 1–33 (MADNADDLFQIPKNFYKEGSHFIKRCVKPDRKE) are cytoplasmic. A helical membrane pass occupies residues 34-62 (FLSISKAVATGFVLMGLIGYIIKLIHIPI). Residues 63–70 (NKVLVGGA) are Extracellular-facing.

The protein belongs to the SecE/SEC61-gamma family. Heterotrimeric complex composed of SEC61-alpha, SEC61-beta and SEC61-gamma.

It is found in the endoplasmic reticulum membrane. Necessary for protein translocation in the endoplasmic reticulum. The polypeptide is Probable protein transport protein Sec61 subunit gamma (sss1) (Schizosaccharomyces pombe (strain 972 / ATCC 24843) (Fission yeast)).